Consider the following 231-residue polypeptide: Mediator of RNA polymerase II transcription subunit 18 (231 aa).

Positions 191–218 (HLTDIEALNKAVKELEKVKTELHGLMNL) form a coiled coil.

This sequence belongs to the Mediator complex subunit 18 family. Component of the Mediator complex.

It is found in the nucleus. Component of the Mediator complex, a coactivator involved in the regulated transcription of nearly all RNA polymerase II-dependent genes. Mediator functions as a bridge to convey information from gene-specific regulatory proteins to the basal RNA polymerase II transcription machinery. Mediator is recruited to promoters by direct interactions with regulatory proteins and serves as a scaffold for the assembly of a functional preinitiation complex with RNA polymerase II and the general transcription factors. The protein is Mediator of RNA polymerase II transcription subunit 18 (SRB5) of Yarrowia lipolytica (strain CLIB 122 / E 150) (Yeast).